Reading from the N-terminus, the 320-residue chain is Histidine decarboxylase proenzyme (320 aa).

The propeptide occupies 2–11 (NKNLEANRNR). Ser98 is subject to Pyruvic acid (Ser). Catalysis depends on Glu215, which acts as the Proton donor.

As to quaternary structure, the proenzyme is a hexamer of identical pi chains; each pi chain monomer is cleaved to form a small (or beta) chain and a large (or alpha) chain by non-hydrolytic self-catalysis. Requires pyruvate as cofactor.

The enzyme catalyses L-histidine + H(+) = histamine + CO2. This Clostridium perfringens (strain 13 / Type A) protein is Histidine decarboxylase proenzyme (hdc).